A 422-amino-acid chain; its full sequence is F-box/WD repeat-containing protein 2 (422 aa).

The 48-residue stretch at 54–101 folds into the F-box domain; sequence RDFLKLLPLELSFYLLKWLDPQTLLTCCLVSKQWNKVISACTEVWQTA. WD repeat units lie at residues 146-183, 185-221, 224-265, and 276-314; these read GHSA…CVYG, QTHT…RTQH, GHTG…NTLT, and LQKC…NCKC. An N6-acetyllysine modification is found at K298.

In terms of assembly, directly interacts with SKP1 and CUL1. As to expression, widely expressed during embryogenesis and in adult tissues.

Its function is as follows. Substrate-recognition component of the SCF (SKP1-CUL1-F-box protein)-type E3 ubiquitin ligase complex. The protein is F-box/WD repeat-containing protein 2 (Fbxw2) of Mus musculus (Mouse).